We begin with the raw amino-acid sequence, 291 residues long: MPSLKDVKVKIAGVKKTKQITKAMNMVASAKLRGAQQRIERFRPYAEKFYGMLGDLASKADGSAHPLLEVRDEIKTCGIVLATSDRGLCGSFNANLISTALKLAKQKAAEGKTVKFYCVGKKGRDTIRKADFEVVTAIADQMGSFDFQLANKLGLEVINHYLTGELDEVVLVYGEFVSTAKQLPITLPILPIASEKKDEAEAAPSKEYIYEPAVEGLLAELLPRFIKVQIYRGLLDTSASEHAARMAAMDNATRSCDDMIGALTLLFNKTRQASITRDLMDIVGGAEALKG.

It belongs to the ATPase gamma chain family. In terms of assembly, F-type ATPases have 2 components, CF(1) - the catalytic core - and CF(0) - the membrane proton channel. CF(1) has five subunits: alpha(3), beta(3), gamma(1), delta(1), epsilon(1). CF(0) has three main subunits: a, b and c.

The protein localises to the cell inner membrane. In terms of biological role, produces ATP from ADP in the presence of a proton gradient across the membrane. The gamma chain is believed to be important in regulating ATPase activity and the flow of protons through the CF(0) complex. The polypeptide is ATP synthase gamma chain (Nitratidesulfovibrio vulgaris (strain ATCC 29579 / DSM 644 / CCUG 34227 / NCIMB 8303 / VKM B-1760 / Hildenborough) (Desulfovibrio vulgaris)).